The primary structure comprises 309 residues: D-alanine--D-alanine ligase (309 aa).

Residues 110 to 305 (KLCWTGAGLP…FQELVWHILE (196 aa)) enclose the ATP-grasp domain. Position 136-191 (136-191 (RQALGFPVIVKPAEEGSSIGMSRAATAEELAQAWERASGYGCAVFAERWIDGVEYT)) interacts with ATP. 3 residues coordinate Mg(2+): D259, E272, and N274.

The protein belongs to the D-alanine--D-alanine ligase family. It depends on Mg(2+) as a cofactor. The cofactor is Mn(2+).

The protein localises to the cytoplasm. It catalyses the reaction 2 D-alanine + ATP = D-alanyl-D-alanine + ADP + phosphate + H(+). It functions in the pathway cell wall biogenesis; peptidoglycan biosynthesis. In terms of biological role, cell wall formation. This chain is D-alanine--D-alanine ligase, found in Methylococcus capsulatus (strain ATCC 33009 / NCIMB 11132 / Bath).